The sequence spans 378 residues: Dof zinc finger protein 1 (378 aa).

A compositionally biased stretch (low complexity) spans 28-38 (GANPNPAATAP). The segment at 28 to 79 (GANPNPAATAPSSVTGGALRGGGGGGAPPVAGGAGAGSTERRARPQKEKALN) is disordered. The segment covering 45-63 (ALRGGGGGGAPPVAGGAGA) has biased composition (gly residues). The segment covering 66–77 (TERRARPQKEKA) has biased composition (basic and acidic residues). The Dof-type zinc-finger motif lies at 78-132 (LNCPRCNSTNTKFCYYNNYSLQQPRYFCKTCRRYWTEGGSLRNVPVGGGSRKNKR). Zn(2+) contacts are provided by Cys80, Cys83, Cys105, and Cys108. Disordered stretches follow at residues 116–148 (GSLR…ASTA), 203–222 (SLES…NGRG), and 316–378 (LKPT…GTSW). Positions 133-148 (SSSSAASASPASASTA) are enriched in low complexity. Composition is skewed to gly residues over residues 323 to 338 (GTGG…GVDG), 350 to 361 (AGGGGGGPGGHD), and 369 to 378 (MIGGGSGTSW).

It localises to the nucleus. In terms of biological role, transcription factor that may transactivate seed storage protein genes in developing seeds. In Oryza sativa subsp. japonica (Rice), this protein is Dof zinc finger protein 1.